Here is a 387-residue protein sequence, read N- to C-terminus: Succinate--CoA ligase [ADP-forming] subunit beta (387 aa).

Residues 9–236 (KELFAKHNVP…KDATDPLELK (228 aa)) form the ATP-grasp domain. Residues K45, 52–54 (GRG), S94, and E99 each bind ATP. Mg(2+)-binding residues include N191 and D205. Substrate-binding positions include N256 and 318–320 (GIT).

The protein belongs to the succinate/malate CoA ligase beta subunit family. In terms of assembly, heterotetramer of two alpha and two beta subunits. Mg(2+) serves as cofactor.

The catalysed reaction is succinate + ATP + CoA = succinyl-CoA + ADP + phosphate. The enzyme catalyses GTP + succinate + CoA = succinyl-CoA + GDP + phosphate. The protein operates within carbohydrate metabolism; tricarboxylic acid cycle; succinate from succinyl-CoA (ligase route): step 1/1. In terms of biological role, succinyl-CoA synthetase functions in the citric acid cycle (TCA), coupling the hydrolysis of succinyl-CoA to the synthesis of either ATP or GTP and thus represents the only step of substrate-level phosphorylation in the TCA. The beta subunit provides nucleotide specificity of the enzyme and binds the substrate succinate, while the binding sites for coenzyme A and phosphate are found in the alpha subunit. The polypeptide is Succinate--CoA ligase [ADP-forming] subunit beta (Mycolicibacterium gilvum (strain PYR-GCK) (Mycobacterium gilvum (strain PYR-GCK))).